The following is a 96-amino-acid chain: Plasminogen-like protein A (96 aa).

The signal sequence occupies residues 1 to 19 (MEHKEVVLLLLLFLKSGQG). The 77-residue stretch at 20-96 (EPLDDYVNAQ…RMRDVVLFEK (77 aa)) folds into the PAN domain. 2 cysteine pairs are disulfide-bonded: cysteine 49/cysteine 73 and cysteine 53/cysteine 61.

In terms of tissue distribution, expressed in liver.

It is found in the secreted. May bind non-covalently to lysine binding sites present in the kringle structures of plasminogen. This may interfere with the binding of fibrin or alpha-2-antiplasmin to plasminogen and may result in the localization of activity at sites necessary for extracellular matrix destruction. The chain is Plasminogen-like protein A (PLGLA) from Homo sapiens (Human).